The sequence spans 1034 residues: Integrin alpha-V (1034 aa).

The signal sequence occupies residues 1–19; the sequence is MAALRASLLLSCALTAARA. Topologically, residues 20 to 978 are extracellular; sequence FNLDAERPAV…WGIQPQPMPV (959 aa). FG-GAP repeat units lie at residues 21 to 86, 97 to 158, 161 to 213, 225 to 279, 280 to 345, 346 to 403, and 407 to 470; these read NLDA…RNCQ, DFAP…VEYA, RSTT…LAKY, QLAT…GKNM, SSMY…GGFQ, IAKL…GLNA, and RILE…VNPT. N-linked (GlcNAc...) asparagine glycosylation occurs at Asn-62. Cystine bridges form between Cys-77–Cys-85, Cys-126–Cys-146, and Cys-160–Cys-173. Residues Asp-248, Asp-252, Ile-254, and Asp-256 each contribute to the Ca(2+) site. Asn-278 and Asn-284 each carry an N-linked (GlcNAc...) asparagine glycan. Residues Asp-302, Asn-304, Asp-306, Tyr-308, Asp-310, Asp-367, Asp-369, Asp-371, Phe-373, Asp-375, Asp-431, Asp-433, Asn-435, Tyr-437, and Asp-439 each contribute to the Ca(2+) site. 2 cysteine pairs are disulfide-bonded: Cys-479–Cys-488 and Cys-494–Cys-551. Asn-540 and Asn-601 each carry an N-linked (GlcNAc...) asparagine glycan. Intrachain disulfides connect Cys-612-Cys-618 and Cys-684-Cys-697. Asn-690, Asn-821, Asn-837, and Asn-860 each carry an N-linked (GlcNAc...) asparagine glycan. Intrachain disulfides connect Cys-838–Cys-900 and Cys-890–Cys-895. Residues Asn-931, Asn-951, Asn-959, and Asn-966 are each glycosylated (N-linked (GlcNAc...) asparagine). A helical membrane pass occupies residues 979-1002; it reads PVWVIILAVLAGLLLLAVLVLVMY. At 1003-1034 the chain is on the cytoplasmic side; that stretch reads RMGFFKRVRPPQEEQEREQLQPHENGEGTSEA. The short motif at 1005–1009 is the GFFKR motif element; it reads GFFKR. The segment covering 1013 to 1028 has biased composition (basic and acidic residues); that stretch reads PQEEQEREQLQPHENG. The interval 1013–1034 is disordered; sequence PQEEQEREQLQPHENGEGTSEA.

Belongs to the integrin alpha chain family. In terms of assembly, heterodimer of an alpha and a beta subunit. The alpha subunit is composed of a heavy and a light chain linked by a disulfide bond. Alpha-V (ITGAV) associates with either beta-1 (ITGB1), beta-3 (ITGB3), beta-5 (ITGB5), beta-6 (ITGB6) or beta-8 (ITGB8). Interacts with RAB25. Interacts with CIB1. Integrins ITGAV:ITGB3 and ITGAV:ITGB5 interact with FBLN5 (via N-terminus). ITGAV:ITGB3 and ITGAV:ITGB5 interact with CCN3. ITGAV:ITGB3 interacts with ADGRA2. ITGAV:ITGB3 interacts with FGF2; it is likely that FGF2 can simultaneously bind ITGAV:ITGB3 and FGF receptors. ITGAV:ITGB3 is found in a ternary complex with CX3CR1 and CX3CL1. ITGAV:ITGB3 is found in a ternary complex with NRG1 and ERBB3. ITGAV:ITGB3 is found in a ternary complex with FGF1 and FGFR1. ITGAV:ITGB3 is found in a ternary complex with IGF1 and IGF1R. ITGAV:ITGB3 interacts with IGF2. ITGAV:ITGB3 and ITGAV:ITGB6 interact with FBN1. ITGAV:ITGB3 interacts with CD9, CD81 and CD151 (via second extracellular domain). ITGAV:ITGB6 interacts with TGFB1.

The protein resides in the membrane. It localises to the cell junction. Its subcellular location is the focal adhesion. In terms of biological role, the alpha-V (ITGAV) integrins are receptors for vitronectin, cytotactin, fibronectin, fibrinogen, laminin, matrix metalloproteinase-2, osteopontin, osteomodulin, prothrombin, thrombospondin, TGFB1 and vWF. They recognize the sequence R-G-D in a wide array of ligands. Alpha-V integrins may play a role in embryo implantation, angiogenesis and wound healing. ITGAV:ITGB3 binds to fractalkine (CX3CL1) and may act as its coreceptor in CX3CR1-dependent fractalkine signaling. ITGAV:ITGB3 binds to NRG1 (via EGF domain) and this binding is essential for NRG1-ERBB signaling. ITGAV:ITGB3 binds to FGF1 and this binding is essential for FGF1 signaling. ITGAV:ITGB3 binds to FGF2 and this binding is essential for FGF2 signaling. ITGAV:ITGB3 binds to IGF1 and this binding is essential for IGF1 signaling. ITGAV:ITGB3 binds to IGF2 and this binding is essential for IGF2 signaling. ITGAV:ITGB3 binds to IL1B and this binding is essential for IL1B signaling. ITGAV:ITGB3 binds to PLA2G2A via a site (site 2) which is distinct from the classical ligand-binding site (site 1) and this induces integrin conformational changes and enhanced ligand binding to site 1. ITGAV:ITGB3 and ITGAV:ITGB6 act as receptors for fibrillin-1 (FBN1) and mediate R-G-D-dependent cell adhesion to FBN1. Integrin alpha-V/beta-6 or alpha-V/beta-8 (ITGAV:ITGB6 or ITGAV:ITGB8) mediates R-G-D-dependent release of transforming growth factor beta-1 (TGF-beta-1) from regulatory Latency-associated peptide (LAP), thereby playing a key role in TGF-beta-1 activation. ITGAV:ITGB3 acts as a receptor for CD40LG. ITGAV:ITGB3 acts as a receptor for IBSP and promotes cell adhesion and migration to IBSP. This Gallus gallus (Chicken) protein is Integrin alpha-V (ITGAV).